The chain runs to 345 residues: Probable branched-chain amino acid transport permease protein LivM (345 aa).

Helical transmembrane passes span 3-23, 42-62, 91-111, 124-144, 163-183, 222-242, 269-289, and 297-317; these read IDLI…SLSL, LVGA…YFGI, ILIL…AIFI, ITLL…LNII, YRGW…YLFF, IGSA…VNII, GVAL…IYKY, and IPFE…LLIL.

Belongs to the binding-protein-dependent transport system permease family. LivHM subfamily.

Its subcellular location is the cell membrane. Functionally, part of the binding-protein-dependent transport system for branched-chain amino acids. Probably responsible for the translocation of the substrates across the membrane. The chain is Probable branched-chain amino acid transport permease protein LivM (livM) from Methanocaldococcus jannaschii (strain ATCC 43067 / DSM 2661 / JAL-1 / JCM 10045 / NBRC 100440) (Methanococcus jannaschii).